The following is a 591-amino-acid chain: Transcription factor COE1-A (591 aa).

Positions 63 to 66 are interaction with DNA; sequence RKSN. A C5-type zinc finger spans residues 151-170; it reads CRVLLTHEIMCSRCCDKKSC. Interaction with DNA regions lie at residues 197–204 and 236–239; these read NCLKNAGN and NNSK. Residues 262-344 enclose the IPT/TIG domain; sequence PCIKAISPSE…CKGTPGRFIY (83 aa). Over residues 454–466 the composition is skewed to polar residues; it reads ANQGFSRNTSSVS. Residues 454 to 484 form a disordered region; the sequence is ANQGFSRNTSSVSPHGYVPSTTPQQSSYSTV. Low complexity predominate over residues 471–484; it reads VPSTTPQQSSYSTV.

It belongs to the COE family. In terms of assembly, forms either a homodimer or a heterodimer with a related family member. In terms of tissue distribution, detected in B cells.

The protein localises to the nucleus. Functionally, transcriptional activator. The polypeptide is Transcription factor COE1-A (Danio rerio (Zebrafish)).